Consider the following 539-residue polypeptide: Putative dimethylaniline monooxygenase [N-oxide-forming] 6 (539 aa).

Residues 9–13 (GAGVS), glutamate 32, 40–41 (LW), and 61–62 (NS) each bind FAD. 195 to 198 (SGSD) contacts NADP(+). A helical membrane pass occupies residues 518-538 (FYNLLKMLSFPLLLLAVTLTF).

The protein belongs to the FMO family. It depends on FAD as a cofactor.

The protein localises to the microsome membrane. It localises to the endoplasmic reticulum membrane. It catalyses the reaction N,N-dimethylaniline + NADPH + O2 + H(+) = N,N-dimethylaniline N-oxide + NADP(+) + H2O. It is probable that this protein is only produced in very small quantity or not at all as the gene coding for it seems to be unable to produce full-length transcripts. The protein is Putative dimethylaniline monooxygenase [N-oxide-forming] 6 (FMO6P) of Homo sapiens (Human).